A 510-amino-acid polypeptide reads, in one-letter code: 2,3-bisphosphoglycerate-independent phosphoglycerate mutase (510 aa).

Mn(2+)-binding residues include Asp-10 and Ser-60. Ser-60 acts as the Phosphoserine intermediate in catalysis. Residues His-121, 150 to 151 (RD), Arg-182, Arg-188, 252 to 255 (RPDR), and Lys-325 contribute to the substrate site. Mn(2+) is bound by residues Asp-392, His-396, Asp-433, His-434, and His-451.

This sequence belongs to the BPG-independent phosphoglycerate mutase family. It depends on Mn(2+) as a cofactor.

The protein localises to the plastid. It localises to the chloroplast. The enzyme catalyses (2R)-2-phosphoglycerate = (2R)-3-phosphoglycerate. It participates in carbohydrate degradation; glycolysis; pyruvate from D-glyceraldehyde 3-phosphate: step 3/5. Catalyzes the interconversion of 2-phosphoglycerate and 3-phosphoglycerate. In Gracilaria tenuistipitata var. liui (Red alga), this protein is 2,3-bisphosphoglycerate-independent phosphoglycerate mutase.